Here is a 147-residue protein sequence, read N- to C-terminus: Large ribosomal subunit protein uL16c (147 aa).

Residues 1–17 (MLSPKRTRFRKQHRGRM) are compositionally biased toward basic residues. The interval 1–20 (MLSPKRTRFRKQHRGRMKGI) is disordered.

The protein belongs to the universal ribosomal protein uL16 family. In terms of assembly, part of the 50S ribosomal subunit.

The protein resides in the plastid. It localises to the chloroplast. The sequence is that of Large ribosomal subunit protein uL16c from Ipomoea purpurea (Common morning glory).